Reading from the N-terminus, the 619-residue chain is MLDSPLLSKIIEKPTALSVLKSVFGYQSFRKGQEEVINAALNGQDALVVMATGNGKSLCYQIPALCFDGLTLVISPLISLMKDQVDQLQANGIEADFLNSSQTLEQQQQVQNKLISGQLKLLYVSPEKVMTNSFFQLISYSKVCFIAIDEAHCISQWGHDFRPEYTQLGGLKASFPDAPIMALTATADYATQQDILRHLNLKNLHKYIGSFDRPNIRYTLEEKYKPMEQLTRFVLAQKGKSGIIYCNSRNKVERIAESLRNKGVSAAAYHAGMETAIRERVQQDFQRDNVQVVVATIAFGMGINKSNVRFVAHFDLPRSIESYYQETGRAGRDDLPAEAVLFYEPADYAWLQKILLEKPETPQRQIEQHKLEAIGEFAESQTCRRLVLLNYFGEHRQTPCNNCDICLDPPKKYDGLVDAQKVMSTIYRVGQCFGAHYVIAVLRGMHNQKIIERQHHKLSVYGIGKDKSKEHWQSVIRQLIHLGFVQQVISELNPTLQLTESAKVILKGEEPLELAMPRISAISKIAHNPQRQGVANYDKDLFARLRFLRKQIADKENIPPYIVFNDATLQEMAQYMPTSNIEMLQINGVGSIKLERFGQPFMALIQEHKAILANAQNND.

A Helicase ATP-binding domain is found at 37-205; it reads INAALNGQDA…LRHLNLKNLH (169 aa). 50 to 57 is a binding site for ATP; sequence MATGNGKS. A DEAH box motif is present at residues 149–152; that stretch reads DEAH. Residues 229-374 form the Helicase C-terminal domain; that stretch reads QLTRFVLAQK…QIEQHKLEAI (146 aa). Zn(2+) is bound by residues cysteine 383, cysteine 400, cysteine 403, and cysteine 406. The HRDC domain occupies 535 to 615; it reads ANYDKDLFAR…QEHKAILANA (81 aa).

This sequence belongs to the helicase family. RecQ subfamily. Mg(2+) serves as cofactor. It depends on Zn(2+) as a cofactor.

The catalysed reaction is Couples ATP hydrolysis with the unwinding of duplex DNA by translocating in the 3'-5' direction.. It catalyses the reaction ATP + H2O = ADP + phosphate + H(+). An ATP-dependent DNA helicase which unwinds DNA in a 3'-5' direction. Plays a role in recombination. This Haemophilus influenzae (strain ATCC 51907 / DSM 11121 / KW20 / Rd) protein is ATP-dependent DNA helicase RecQ.